A 561-amino-acid polypeptide reads, in one-letter code: Dihydroxy-acid dehydratase (561 aa).

Residue C50 participates in [2Fe-2S] cluster binding. D82 is a binding site for Mg(2+). C123 is a [2Fe-2S] cluster binding site. Residues D124 and K125 each coordinate Mg(2+). Residue K125 is modified to N6-carboxylysine. C195 lines the [2Fe-2S] cluster pocket. Residue E447 coordinates Mg(2+). S473 serves as the catalytic Proton acceptor.

It belongs to the IlvD/Edd family. As to quaternary structure, homodimer. Requires [2Fe-2S] cluster as cofactor. It depends on Mg(2+) as a cofactor.

The catalysed reaction is (2R)-2,3-dihydroxy-3-methylbutanoate = 3-methyl-2-oxobutanoate + H2O. It catalyses the reaction (2R,3R)-2,3-dihydroxy-3-methylpentanoate = (S)-3-methyl-2-oxopentanoate + H2O. It functions in the pathway amino-acid biosynthesis; L-isoleucine biosynthesis; L-isoleucine from 2-oxobutanoate: step 3/4. It participates in amino-acid biosynthesis; L-valine biosynthesis; L-valine from pyruvate: step 3/4. In terms of biological role, functions in the biosynthesis of branched-chain amino acids. Catalyzes the dehydration of (2R,3R)-2,3-dihydroxy-3-methylpentanoate (2,3-dihydroxy-3-methylvalerate) into 2-oxo-3-methylpentanoate (2-oxo-3-methylvalerate) and of (2R)-2,3-dihydroxy-3-methylbutanoate (2,3-dihydroxyisovalerate) into 2-oxo-3-methylbutanoate (2-oxoisovalerate), the penultimate precursor to L-isoleucine and L-valine, respectively. This chain is Dihydroxy-acid dehydratase, found in Acaryochloris marina (strain MBIC 11017).